Reading from the N-terminus, the 67-residue chain is Protein SlyX homolog (67 aa).

Belongs to the SlyX family.

This is Protein SlyX homolog from Mesorhizobium japonicum (strain LMG 29417 / CECT 9101 / MAFF 303099) (Mesorhizobium loti (strain MAFF 303099)).